The chain runs to 173 residues: Small ribosomal subunit protein uS10m (173 aa).

This sequence belongs to the universal ribosomal protein uS10 family. As to quaternary structure, component of the mitochondrial ribosome small subunit (28S) which comprises a 12S rRNA and about 30 distinct proteins.

It localises to the mitochondrion. In Drosophila melanogaster (Fruit fly), this protein is Small ribosomal subunit protein uS10m (mRpS10).